We begin with the raw amino-acid sequence, 197 residues long: dITP/XTP pyrophosphatase (197 aa).

A substrate-binding site is contributed by 8-13; sequence TGNPGK. Residues E40 and D69 each coordinate Mg(2+). D69 serves as the catalytic Proton acceptor. Substrate is bound by residues S70, 154-157, K177, and 182-183; these read FGYD and HR.

Belongs to the HAM1 NTPase family. In terms of assembly, homodimer. The cofactor is Mg(2+).

It catalyses the reaction XTP + H2O = XMP + diphosphate + H(+). The catalysed reaction is dITP + H2O = dIMP + diphosphate + H(+). It carries out the reaction ITP + H2O = IMP + diphosphate + H(+). Pyrophosphatase that catalyzes the hydrolysis of nucleoside triphosphates to their monophosphate derivatives, with a high preference for the non-canonical purine nucleotides XTP (xanthosine triphosphate), dITP (deoxyinosine triphosphate) and ITP. Seems to function as a house-cleaning enzyme that removes non-canonical purine nucleotides from the nucleotide pool, thus preventing their incorporation into DNA/RNA and avoiding chromosomal lesions. In Photorhabdus laumondii subsp. laumondii (strain DSM 15139 / CIP 105565 / TT01) (Photorhabdus luminescens subsp. laumondii), this protein is dITP/XTP pyrophosphatase.